A 520-amino-acid polypeptide reads, in one-letter code: MDSDEEFIDNSLAVGDIVYDEAQIAQQQQEYAAQLKLASTAIPTVVKDFIQYFHRCLSDNSVYELHGCYENSFGKLTDKFYKNSHWPHPVAQVAPLVKNDPVFLYFYSELYYRHLYAKLTPTPLERFESYSNYCNLFNYILNSDGPVDLELPTSWAWGIVDEFIYQYNSYWMTKEAHNSDGVAPDTWGTYSVLNVLYSLSEKTKIREQLRAIKAGLDPMDVAGPYGSRPLYKMLGYFCVIGLLRVHTLLGDFTLALKTMESIELTKKALFARVAPAHFATYYYVGICYVMTRRYADAIRCFSHVLTYMARTKNVQGPRYDAKRSEQMYALLAICVVLSPARLDDSIHVALRDRYGDQMAAMQRGDLKLFEELFTFAAPKFIQPGDVHGGDPLKHHLKIFMVDVTNTLSTANLKSYLNLYATMDLGKLASFLDTDAEDLRSQLVTLKMKNRQLRWTEGELADGTYQHCSELDIALENDLIHVAEAKGGRKFADWFIRNTVKNYSVQDYIVNGDKKDKEKKN.

The 201-residue stretch at 278–478 (FATYYYVGIC…ELDIALENDL (201 aa)) folds into the PCI domain.

It belongs to the eIF-3 subunit L family. As to quaternary structure, component of the eukaryotic translation initiation factor 3 (eIF-3) complex.

It localises to the cytoplasm. Functionally, component of the eukaryotic translation initiation factor 3 (eIF-3) complex, which is involved in protein synthesis of a specialized repertoire of mRNAs and, together with other initiation factors, stimulates binding of mRNA and methionyl-tRNAi to the 40S ribosome. The eIF-3 complex specifically targets and initiates translation of a subset of mRNAs involved in cell proliferation. In Yarrowia lipolytica (strain CLIB 122 / E 150) (Yeast), this protein is Eukaryotic translation initiation factor 3 subunit L.